The primary structure comprises 370 residues: Chorismate synthase (370 aa).

Residues 41 to 60 (IQGDLDRRKPGTSRHVTQRK) are disordered. Positions 48 and 54 each coordinate NADP(+). Residues 125 to 127 (RSS), 238 to 239 (NA), Gly-278, 293 to 297 (KPTSS), and Arg-319 each bind FMN.

It belongs to the chorismate synthase family. In terms of assembly, homotetramer. It depends on FMNH2 as a cofactor.

The catalysed reaction is 5-O-(1-carboxyvinyl)-3-phosphoshikimate = chorismate + phosphate. It functions in the pathway metabolic intermediate biosynthesis; chorismate biosynthesis; chorismate from D-erythrose 4-phosphate and phosphoenolpyruvate: step 7/7. Functionally, catalyzes the anti-1,4-elimination of the C-3 phosphate and the C-6 proR hydrogen from 5-enolpyruvylshikimate-3-phosphate (EPSP) to yield chorismate, which is the branch point compound that serves as the starting substrate for the three terminal pathways of aromatic amino acid biosynthesis. This reaction introduces a second double bond into the aromatic ring system. This Cupriavidus pinatubonensis (strain JMP 134 / LMG 1197) (Cupriavidus necator (strain JMP 134)) protein is Chorismate synthase.